Reading from the N-terminus, the 257-residue chain is Receptor expression-enhancing protein 4 (257 aa).

The next 2 helical transmembrane spans lie at 1–21 (MVSW…YPAY) and 42–62 (WIVF…ISWF). A phosphoserine mark is found at Ser-152 and Ser-194. Positions 177–257 (VPRRRPPIGY…KKAMPSDMDS (81 aa)) are disordered. Position 196 is a phosphothreonine (Thr-196). Residues Ser-202 and Ser-253 each carry the phosphoserine modification.

The protein belongs to the DP1 family.

The protein resides in the endoplasmic reticulum membrane. In terms of biological role, microtubule-binding protein required to ensure proper cell division and nuclear envelope reassembly by sequestering the endoplasmic reticulum away from chromosomes during mitosis. Probably acts by clearing the endoplasmic reticulum membrane from metaphase chromosomes. In Mus musculus (Mouse), this protein is Receptor expression-enhancing protein 4 (Reep4).